Here is a 95-residue protein sequence, read N- to C-terminus: Small ribosomal subunit protein bS6 (95 aa).

Belongs to the bacterial ribosomal protein bS6 family.

Binds together with bS18 to 16S ribosomal RNA. The protein is Small ribosomal subunit protein bS6 of Nocardia farcinica (strain IFM 10152).